The following is a 234-amino-acid chain: Purine nucleoside phosphorylase DeoD-type (234 aa).

Position 4 (His4) interacts with a purine D-ribonucleoside. Phosphate contacts are provided by residues Gly20, Arg24, Arg43, and Arg87 to Ser90. A purine D-ribonucleoside-binding positions include Glu162, Glu179 to Glu181, and Ser203 to Asp204. The active-site Proton donor is the Asp204.

It belongs to the PNP/UDP phosphorylase family. In terms of assembly, homohexamer; trimer of homodimers.

The catalysed reaction is a purine D-ribonucleoside + phosphate = a purine nucleobase + alpha-D-ribose 1-phosphate. It catalyses the reaction a purine 2'-deoxy-D-ribonucleoside + phosphate = a purine nucleobase + 2-deoxy-alpha-D-ribose 1-phosphate. Catalyzes the reversible phosphorolytic breakdown of the N-glycosidic bond in the beta-(deoxy)ribonucleoside molecules, with the formation of the corresponding free purine bases and pentose-1-phosphate. This Jannaschia sp. (strain CCS1) protein is Purine nucleoside phosphorylase DeoD-type.